Consider the following 381-residue polypeptide: MIRKIPSFIKIYESLIKIPTISSLNNKLDQSNKVLIDLLSNYFSELNFLINIKNIPNTNKFNMLASFGDGKGGILFSGHTDTVDFDEHLWTKDPFKLTEKNNKLYGLGTVDMKGFFAFILDALCSINIKSIKKPIYILATANEETDMSGARYFIQSSSIKPDFIIIGEPTSLKLVKAHKGHVSYSIDVVGNTGHSSNPANGINSIEIMHLVIKKLLKLKIYLREKYFHKDFSIGYPTMNFSSINGGNAINRICALCNLKFEIRPTPGLTLTQIEILIQEMLQAIFKKWPNRIFLKNLFFSVPPYEFPKEKKIIKKIENSCQLKPTTANYCTEAPFLGKIGPTLILGPGSIQQAHNADEYLDCSFIKPTKKIIRKLIKNFCY.

Histidine 79 provides a ligand contact to Zn(2+). The active site involves aspartate 81. Position 111 (aspartate 111) interacts with Zn(2+). Glutamate 143 is an active-site residue. Positions 144, 168, and 354 each coordinate Zn(2+).

The protein belongs to the peptidase M20A family. ArgE subfamily. In terms of assembly, homodimer. It depends on Zn(2+) as a cofactor. Co(2+) serves as cofactor. Glutathione is required as a cofactor.

The protein localises to the cytoplasm. The enzyme catalyses N(2)-acetyl-L-ornithine + H2O = L-ornithine + acetate. It participates in amino-acid biosynthesis; L-arginine biosynthesis; L-ornithine from N(2)-acetyl-L-ornithine (linear): step 1/1. Functionally, catalyzes the hydrolysis of the amide bond of N(2)-acetylated L-amino acids. Cleaves the acetyl group from N-acetyl-L-ornithine to form L-ornithine, an intermediate in L-arginine biosynthesis pathway, and a branchpoint in the synthesis of polyamines. The sequence is that of Acetylornithine deacetylase from Buchnera aphidicola subsp. Schizaphis graminum (strain Sg).